Reading from the N-terminus, the 274-residue chain is 2,3,4,5-tetrahydropyridine-2,6-dicarboxylate N-succinyltransferase (274 aa).

Residues arginine 104 and aspartate 141 each contribute to the substrate site.

Belongs to the transferase hexapeptide repeat family. As to quaternary structure, homotrimer.

Its subcellular location is the cytoplasm. It carries out the reaction (S)-2,3,4,5-tetrahydrodipicolinate + succinyl-CoA + H2O = (S)-2-succinylamino-6-oxoheptanedioate + CoA. The protein operates within amino-acid biosynthesis; L-lysine biosynthesis via DAP pathway; LL-2,6-diaminopimelate from (S)-tetrahydrodipicolinate (succinylase route): step 1/3. This Yersinia enterocolitica serotype O:8 / biotype 1B (strain NCTC 13174 / 8081) protein is 2,3,4,5-tetrahydropyridine-2,6-dicarboxylate N-succinyltransferase.